A 293-amino-acid chain; its full sequence is Homoserine kinase (293 aa).

84–94 (PISRGLGSSSA) serves as a coordination point for ATP.

Belongs to the GHMP kinase family. Homoserine kinase subfamily.

The protein resides in the cytoplasm. It catalyses the reaction L-homoserine + ATP = O-phospho-L-homoserine + ADP + H(+). It functions in the pathway amino-acid biosynthesis; L-threonine biosynthesis; L-threonine from L-aspartate: step 4/5. Functionally, catalyzes the ATP-dependent phosphorylation of L-homoserine to L-homoserine phosphate. In Wolinella succinogenes (strain ATCC 29543 / DSM 1740 / CCUG 13145 / JCM 31913 / LMG 7466 / NCTC 11488 / FDC 602W) (Vibrio succinogenes), this protein is Homoserine kinase.